A 29-amino-acid chain; its full sequence is Dermaseptin-J5 (29 aa).

At Val29 the chain carries Valine amide.

Expressed by the skin glands.

The protein localises to the secreted. Has antimicrobial activity. The sequence is that of Dermaseptin-J5 from Phasmahyla jandaia (Jandaia leaf frog).